Here is a 157-residue protein sequence, read N- to C-terminus: UPF0225 protein PSPTO_4127 (157 aa).

The protein belongs to the UPF0225 family.

This chain is UPF0225 protein PSPTO_4127, found in Pseudomonas syringae pv. tomato (strain ATCC BAA-871 / DC3000).